The primary structure comprises 1162 residues: Leptin receptor (1162 aa).

Residues 1 to 21 (MMCQKFYVVLLHWEFLYVIAA) form the signal peptide. The Extracellular portion of the chain corresponds to 22–839 (LNLAYPISPW…AIDKQQNDAG (818 aa)). Disulfide bonds link cysteine 37-cysteine 90, cysteine 89-cysteine 99, cysteine 131-cysteine 142, cysteine 186-cysteine 195, and cysteine 188-cysteine 193. Asparagine 41, asparagine 56, asparagine 73, and asparagine 98 each carry an N-linked (GlcNAc...) asparagine glycan. Asparagine 187 carries an N-linked (GlcNAc...) asparagine glycan. The 94-residue stretch at 238–331 (PPLGLHMEVT…SPQVFTTQDV (94 aa)) folds into the Fibronectin type-III 1 domain. 2 N-linked (GlcNAc...) asparagine glycosylation sites follow: asparagine 275 and asparagine 345. In terms of domain architecture, Ig-like spans 329 to 427 (QDVVYFPPKI…HRYAELYVID (99 aa)). Intrachain disulfides connect cysteine 350–cysteine 410 and cysteine 411–cysteine 416. N-linked (GlcNAc...) asparagine glycosylation is present at asparagine 431. 3 cysteine pairs are disulfide-bonded: cysteine 434-cysteine 445, cysteine 471-cysteine 526, and cysteine 486-cysteine 496. The interval 465-482 (HRRSLYCPDSPSIHPTSE) is leptin-binding. N-linked (GlcNAc...) asparagine glycans are attached at residues asparagine 514, asparagine 622, asparagine 657, asparagine 668, asparagine 686, asparagine 695, asparagine 698, and asparagine 726. 3 Fibronectin type-III domains span residues 537–632 (PPSN…TLVM), 637–729 (PMRG…NLTF), and 738–832 (AVES…DAID). Positions 620-624 (WSNWS) match the WSXWS motif motif. Residues 840-860 (LYVIVPIIISSCVLLLGTLLI) form a helical membrane-spanning segment. The Cytoplasmic portion of the chain corresponds to 861–1162 (SHQRMKKLFW…MENKMCDLTV (302 aa)). The Box 1 motif motif lies at 869 to 877 (FWDDVPNPK). Serine 880 is modified (phosphoserine). Residues 891–896 (ETFEHL) are required for JAK2 activation. Positions 896 to 904 (LFTKHAESV) are required for STAT3 phosphorylation. At tyrosine 985 the chain carries Phosphotyrosine; by JAK2. Tyrosine 1077 bears the Phosphotyrosine mark. The residue at position 1138 (tyrosine 1138) is a Phosphotyrosine; by JAK2.

This sequence belongs to the type I cytokine receptor family. Type 2 subfamily. In terms of assembly, present as a mixture of monomers and dimers. The phosphorylated receptor binds a number of SH2 domain-containing proteins such as JAK2, STAT3, PTPN11, and SOCS3. Interaction with SOCS3 inhibits JAK/STAT signaling and MAPK cascade. In terms of processing, on ligand binding, phosphorylated on two conserved C-terminal tyrosine residues (isoform B only) by JAK2. Tyr-985 is required for complete binding and activation of PTPN11, ERK/FOS activation,for interaction with SOCS3 and SOCS3 mediated inhibition of leptin signaling. Phosphorylation on Tyr-1138 is required for STAT3 binding/activation. Phosphorylation of Tyr-1077 has a more accessory role. In terms of tissue distribution, isoform A: highest level of expression in lung and kidney, also present in heart, brain, spleen, liver, muscle, choroid plexus and hypothalamus. Isoform B: highest levels of expression in hypothalamus and lower levels in brain, testes and adipose tissue. Expressed by neurons of the parabrachial nucleus. Expressed by peripheral blood mononuclear cells and CD4(+) T-cells. Isoform E: expressed in adipose tissue, liver, hypothalamus, cerebral microvessels, heart, and testes.

It is found in the cell membrane. It localises to the basolateral cell membrane. The protein localises to the secreted. Its function is as follows. Receptor for hormone LEP/leptin. On ligand binding, mediates LEP central and peripheral effects through the activation of different signaling pathways such as JAK2/STAT3 and MAPK cascade/FOS. In the hypothalamus, LEP acts as an appetite-regulating factor that induces a decrease in food intake and an increase in energy consumption by inducing anorexinogenic factors and suppressing orexigenic neuropeptides, also regulates bone mass and secretion of hypothalamo-pituitary-adrenal hormones. In the periphery, increases basal metabolism, influences reproductive function, regulates pancreatic beta-cell function and insulin secretion, is pro-angiogenic and affects innate and adaptive immunity. Control of energy homeostasis and melanocortin production (stimulation of POMC and full repression of AgRP transcription) is mediated by STAT3 signaling, whereas distinct signals regulate NPY and the control of fertility, growth and glucose homeostasis. Involved in the regulation of counter-regulatory response to hypoglycemia by inhibiting neurons of the parabrachial nucleus. Has a specific effect on T lymphocyte responses, differentially regulating the proliferation of naive and memory T-cells. Leptin increases Th1 and suppresses Th2 cytokine production. May transport LEP across the blood-brain barrier. Binds LEP and mediates LEP endocytosis. Does not induce phosphorylation of and activate STAT3. Functionally, antagonizes Isoform A and isoform B-mediated LEP binding and endocytosis. In Mus musculus (Mouse), this protein is Leptin receptor (Lepr).